Consider the following 483-residue polypeptide: Regulatory protein ViaA (483 aa).

It belongs to the ViaA family. Homodimer. Interacts with RavA.

The protein localises to the cytoplasm. In terms of biological role, component of the RavA-ViaA chaperone complex, which may act on the membrane to optimize the function of some of the respiratory chains. ViaA stimulates the ATPase activity of RavA. The sequence is that of Regulatory protein ViaA from Shigella flexneri serotype 5b (strain 8401).